The chain runs to 347 residues: uncharacterized protein (347 aa).

Asp-207, Asp-218, His-279, Glu-312, and Glu-326 together coordinate Mn(2+).

It belongs to the peptidase M24B family. It depends on Mn(2+) as a cofactor.

This is an uncharacterized protein from Methanocaldococcus jannaschii (strain ATCC 43067 / DSM 2661 / JAL-1 / JCM 10045 / NBRC 100440) (Methanococcus jannaschii).